Reading from the N-terminus, the 204-residue chain is Large ribosomal subunit protein uL22c (204 aa).

The protein belongs to the universal ribosomal protein uL22 family. Part of the 50S ribosomal subunit.

It localises to the plastid. The protein resides in the chloroplast. In terms of biological role, this protein binds specifically to 23S rRNA. Its function is as follows. The globular domain of the protein is located near the polypeptide exit tunnel on the outside of the subunit, while an extended beta-hairpin is found that lines the wall of the exit tunnel in the center of the 70S ribosome. The sequence is that of Large ribosomal subunit protein uL22c (rpl22) from Pisum sativum (Garden pea).